The sequence spans 171 residues: MQAHELSGAPWHHPVFWVAVAFVLFFVLFGRKIWGALTSKLDSYADEVRQNLDEARKLRREAEAMLEDARRRKEQALAEAKRLLESAHAEAARAAQALSDDAEASIRRREKMANDRIAAAEKAAVDEVRFAAADIASRAAKDILAREFGPYADAALIDSAISKLPQALRAA.

A helical membrane pass occupies residues 9–29 (APWHHPVFWVAVAFVLFFVLF).

It belongs to the ATPase B chain family. F-type ATPases have 2 components, F(1) - the catalytic core - and F(0) - the membrane proton channel. F(1) has five subunits: alpha(3), beta(3), gamma(1), delta(1), epsilon(1). F(0) has three main subunits: a(1), b(2) and c(10-14). The alpha and beta chains form an alternating ring which encloses part of the gamma chain. F(1) is attached to F(0) by a central stalk formed by the gamma and epsilon chains, while a peripheral stalk is formed by the delta and b chains.

Its subcellular location is the cell inner membrane. F(1)F(0) ATP synthase produces ATP from ADP in the presence of a proton or sodium gradient. F-type ATPases consist of two structural domains, F(1) containing the extramembraneous catalytic core and F(0) containing the membrane proton channel, linked together by a central stalk and a peripheral stalk. During catalysis, ATP synthesis in the catalytic domain of F(1) is coupled via a rotary mechanism of the central stalk subunits to proton translocation. In terms of biological role, component of the F(0) channel, it forms part of the peripheral stalk, linking F(1) to F(0). The chain is ATP synthase subunit b 2 from Granulibacter bethesdensis (strain ATCC BAA-1260 / CGDNIH1).